Reading from the N-terminus, the 250-residue chain is Phosphoribosylaminoimidazole-succinocarboxamide synthase (250 aa).

This sequence belongs to the SAICAR synthetase family.

The enzyme catalyses 5-amino-1-(5-phospho-D-ribosyl)imidazole-4-carboxylate + L-aspartate + ATP = (2S)-2-[5-amino-1-(5-phospho-beta-D-ribosyl)imidazole-4-carboxamido]succinate + ADP + phosphate + 2 H(+). It participates in purine metabolism; IMP biosynthesis via de novo pathway; 5-amino-1-(5-phospho-D-ribosyl)imidazole-4-carboxamide from 5-amino-1-(5-phospho-D-ribosyl)imidazole-4-carboxylate: step 1/2. This Bifidobacterium longum (strain DJO10A) protein is Phosphoribosylaminoimidazole-succinocarboxamide synthase.